The chain runs to 1202 residues: Nitric oxide synthase 3 (1202 aa).

The disordered stretch occupies residues Met-1 to Val-70. Gly-2 carries the N-myristoyl glycine lipid modification. S-palmitoyl cysteine attachment occurs at residues Cys-15 and Cys-26. The segment covering Cys-15–Gly-27 has biased composition (gly residues). Pro residues predominate over residues Ser-33–Pro-65. Zn(2+)-binding residues include Cys-93 and Cys-98. Residues Arg-97–Lys-485 are interaction with NOSIP. Ser-101 contributes to the (6R)-L-erythro-5,6,7,8-tetrahydrobiopterin binding site. Cys-183 provides a ligand contact to heme b. Residues Gln-246, Trp-355, Tyr-356, and Glu-360 each contribute to the L-arginine site. The (6R)-L-erythro-5,6,7,8-tetrahydrobiopterin site is built by Ala-445, Trp-446, and Phe-459. Position 474 (Tyr-474) interacts with heme b. The tract at residues Ile-489–Met-509 is calmodulin-binding. Thr-494 carries the phosphothreonine; by AMPK modification. Positions Ala-519–Phe-702 constitute a Flavodoxin-like domain. FMN-binding residues include Ser-525, Glu-526, Thr-527, Arg-529, Ser-571, and Thr-572. A phosphoserine mark is found at Ser-614, Ser-632, and Ser-637. FMN is bound by residues Ser-653, Cys-660, Glu-686, and Gln-690. Residues Arg-755 to Pro-1001 enclose the FAD-binding FR-type domain. Arg-775 is an NADP(+) binding site. Position 797 (His-797) interacts with FAD. The interval Glu-817–Trp-843 is disordered. Ser-835 is modified (phosphoserine). Residues Arg-937, Tyr-939, Ser-940, Thr-955, Ala-957, Tyr-961, Val-974, Cys-975, and Ser-976 each coordinate FAD. Positions 1015, 1048, 1077, 1078, 1084, 1086, and 1088 each coordinate NADP(+). At Thr-1174 the chain carries Phosphothreonine. At Ser-1176 the chain carries Phosphoserine; by AMPK. Ser-1178 carries the post-translational modification Phosphoserine.

It belongs to the NOS family. Homodimer. Interacts with NOSIP and NOSTRIN. Interacts with HSP90AB1. Forms a complex with ASL, ASS1 and SLC7A1; the complex regulates cell-autonomous L-arginine synthesis and citrulline recycling while channeling extracellular L-arginine to nitric oxide synthesis pathway. The cofactor is heme b. FAD is required as a cofactor. Requires FMN as cofactor. (6R)-L-erythro-5,6,7,8-tetrahydrobiopterin serves as cofactor. Post-translationally, phosphorylation by AMPK at Ser-1176 in the presence of Ca(2+)-calmodulin (CaM) activates activity. In absence of Ca(2+)-calmodulin, AMPK also phosphorylates Thr-494, resulting in inhibition of activity. In terms of tissue distribution, expressed constitutively by vascular endothelium. Detected in alveolar and serosal epithelial cells as well as in endothelial cells in one day old rat. In adult lung, detected in rare endothelial cells.

The protein localises to the membrane. It localises to the caveola. Its subcellular location is the cytoplasm. It is found in the cytoskeleton. The protein resides in the golgi apparatus. The protein localises to the cell membrane. The catalysed reaction is 2 L-arginine + 3 NADPH + 4 O2 + H(+) = 2 L-citrulline + 2 nitric oxide + 3 NADP(+) + 4 H2O. With respect to regulation, stimulated by calcium/calmodulin. Inhibited by NOSIP and NOSTRIN. Produces nitric oxide (NO) which is implicated in vascular smooth muscle relaxation through a cGMP-mediated signal transduction pathway. NO mediates vascular endothelial growth factor (VEGF)-induced angiogenesis in coronary vessels and promotes blood clotting through the activation of platelets. The chain is Nitric oxide synthase 3 from Rattus norvegicus (Rat).